The chain runs to 164 residues: GTP-dependent dephospho-CoA kinase (164 aa).

Residues D40, V41, V42, D59, K61, and E113 each coordinate GTP.

This sequence belongs to the GTP-dependent DPCK family.

The enzyme catalyses 3'-dephospho-CoA + GTP = GDP + CoA + H(+). Its pathway is cofactor biosynthesis; coenzyme A biosynthesis. Functionally, catalyzes the GTP-dependent phosphorylation of the 3'-hydroxyl group of dephosphocoenzyme A to form coenzyme A (CoA). The polypeptide is GTP-dependent dephospho-CoA kinase (Sulfolobus acidocaldarius (strain ATCC 33909 / DSM 639 / JCM 8929 / NBRC 15157 / NCIMB 11770)).